Here is a 229-residue protein sequence, read N- to C-terminus: Platelet-activating factor acetylhydrolase IB subunit alpha2 (229 aa).

N-acetylserine is present on Ser-2. Ser-2 is modified (phosphoserine). Residue Ser-48 is part of the active site. At Ser-64 the chain carries Phosphoserine. Active-site residues include Asp-193 and His-196. A Phosphothreonine modification is found at Thr-220.

Belongs to the 'GDSL' lipolytic enzyme family. Platelet-activating factor acetylhydrolase IB beta/gamma subunits subfamily. In terms of assembly, forms a catalytic dimer which is either homodimer (alpha2/alpha2 homodimer) or heterodimer with PAFAH1B3 (alpha2/alpha1 heterodimer). Component of the cytosolic (PAF-AH (I)) heterotetrameric enzyme, which is composed of PAFAH1B1 (beta), PAFAH1B2 (alpha2) and PAFAH1B3 (alpha1) subunits. The catalytic activity of the enzyme resides in the alpha1 (PAFAH1B3) and alpha2 (PAFAH1B2) subunits, whereas the beta subunit (PAFAH1B1) has regulatory activity. Trimer formation is not essential for the catalytic activity. Interacts (homodimer form) with PAFAH1B1 (homodimer form); PAFAH1B2 competes with NDEL1 for PAFAH1B1 binding. Interacts with VLDLR; this interaction may modulate the Reelin pathway.

Its subcellular location is the cytoplasm. It carries out the reaction a 1-O-alkyl-2-acetyl-sn-glycero-3-phosphocholine + H2O = a 1-O-alkyl-sn-glycero-3-phosphocholine + acetate + H(+). The enzyme catalyses 1-O-hexadecyl-2-acetyl-sn-glycero-3-phosphocholine + H2O = 1-O-hexadecyl-sn-glycero-3-phosphocholine + acetate + H(+). It catalyses the reaction 1-O-hexadecyl-2-acetyl-sn-glycero-3-phosphate + H2O = 1-O-hexadecyl-sn-glycero-3-phosphate + acetate + H(+). The catalysed reaction is 1-O-hexadecyl-2-acetyl-sn-glycero-3-phosphoethanolamine + H2O = 1-O-hexadecyl-sn-glycero-3-phosphoethanolamine + acetate + H(+). With respect to regulation, beta subunit (PAFAH1B1) stimulates the acetylhydrolase activity of the alpha2/alpha2 catalytic homodimer. Alpha2 catalytic subunit of the cytosolic type I platelet-activating factor (PAF) acetylhydrolase (PAF-AH (I)) heterotetrameric enzyme that catalyzes the hydrolyze of the acetyl group at the sn-2 position of PAF and its analogs and modulates the action of PAF. The activity and substrate specificity of PAF-AH (I) are affected by its subunit composition. The alpha2/alpha2 homodimer (PAFAH1B2/PAFAH1B2 homodimer) hydrolyzes PAF and 1-O-alkyl-2-acetyl-sn-glycero-3-phosphorylethanolamine (AAGPE) more efficiently than 1-O-alkyl-2-acetyl-sn-glycero-3-phosphoric acid (AAGPA). In contrast, the alpha1/alpha2 heterodimer(PAFAH1B3/PAFAH1B3 heterodimer) hydrolyzes AAGPA more efficiently than PAF, but has little hydrolytic activity towards AAGPE. May play a role in male germ cell meiosis during the late pachytenestage and meiotic divisions as well as early spermiogenesis. The sequence is that of Platelet-activating factor acetylhydrolase IB subunit alpha2 from Pongo abelii (Sumatran orangutan).